A 31-amino-acid polypeptide reads, in one-letter code: U6-ctenitoxin-Co1a (31 aa).

Disulfide bonds link C2–C18 and C9–C23.

Expressed by the venom gland.

Its subcellular location is the secreted. Functionally, antagonist of L-type calcium channels (Cav1/CACNA1). This is U6-ctenitoxin-Co1a from Ctenus ornatus (Brazilian spider).